The primary structure comprises 975 residues: Aminopeptidase N (975 aa).

Residues 1-11 are Cytoplasmic-facing; it reads MAKGFYISKAL. Residues 12–32 traverse the membrane as a helical; Signal-anchor for type II membrane protein segment; that stretch reads GILAIVLGIAAVSTIIALSVV. Residues 33 to 74 form a cytosolic Ser/Thr-rich junction region; it reads YAQEKNKNAESSPVSSPVSSPVSSPVSPTNPSTTAATTLAQS. Over 33-975 the chain is Extracellular; sequence YAQEKNKNAE…VLQWFRENSQ (943 aa). Residues 41 to 68 are disordered; that stretch reads AESSPVSSPVSSPVSSPVSPTNPSTTAA. Over residues 43–59 the composition is skewed to low complexity; that stretch reads SSPVSSPVSSPVSSPVS. The tract at residues 75–975 is metalloprotease; it reads KPWNHYRLPK…VLQWFRENSQ (901 aa). Asn-134 is a glycosylation site (N-linked (GlcNAc...) asparagine). Position 182 is a sulfotyrosine (Tyr-182). 2 N-linked (GlcNAc...) asparagine glycosylation sites follow: Asn-240 and Asn-271. 358 to 362 contributes to the substrate binding site; the sequence is GAMEN. His-394 is a binding site for Zn(2+). Glu-395 acts as the Proton acceptor in catalysis. Residues His-398 and Glu-417 each coordinate Zn(2+). Sulfotyrosine occurs at positions 425 and 430. 5 N-linked (GlcNAc...) asparagine glycosylation sites follow: Asn-533, Asn-580, Asn-633, Asn-689, and Asn-747. 2 cysteine pairs are disulfide-bonded: Cys-769/Cys-776 and Cys-806/Cys-842. The N-linked (GlcNAc...) asparagine glycan is linked to Asn-826.

Belongs to the peptidase M1 family. (Microbial infection) Interacts with CCoV spike glycoprotein. As to quaternary structure, homodimer. Interacts with SLC6A19. Zn(2+) is required as a cofactor. Sulfated. Post-translationally, N- and O-glycosylated. In terms of processing, may undergo proteolysis and give rise to a soluble form.

Its subcellular location is the cell membrane. It carries out the reaction Release of an N-terminal amino acid, Xaa-|-Yaa- from a peptide, amide or arylamide. Xaa is preferably Ala, but may be most amino acids including Pro (slow action). When a terminal hydrophobic residue is followed by a prolyl residue, the two may be released as an intact Xaa-Pro dipeptide.. Broad specificity aminopeptidase which plays a role in the final digestion of peptides generated from hydrolysis of proteins by gastric and pancreatic proteases. Also involved in the processing of various peptides including peptide hormones, such as angiotensin III and IV, neuropeptides, and chemokines. May also be involved the cleavage of peptides bound to major histocompatibility complex class II molecules of antigen presenting cells. May have a role in angiogenesis and promote cholesterol crystallization. May have a role in amino acid transport by acting as binding partner of amino acid transporter SLC6A19 and regulating its activity. In terms of biological role, (Microbial infection) Probable receptor for canine coronavirus (CCoV). The protein is Aminopeptidase N (ANPEP) of Canis lupus familiaris (Dog).